A 566-amino-acid chain; its full sequence is Malate synthase, glyoxysomal (566 aa).

R182 (proton acceptor) is an active-site residue. D467 serves as the catalytic Proton donor. A Microbody targeting signal motif is present at residues 564–566; that stretch reads SRL.

The protein belongs to the malate synthase family.

Its subcellular location is the glyoxysome. The catalysed reaction is glyoxylate + acetyl-CoA + H2O = (S)-malate + CoA + H(+). It functions in the pathway carbohydrate metabolism; glyoxylate cycle; (S)-malate from isocitrate: step 2/2. This Cucurbita maxima (Pumpkin) protein is Malate synthase, glyoxysomal.